We begin with the raw amino-acid sequence, 315 residues long: Porphobilinogen deaminase (315 aa).

C245 is subject to S-(dipyrrolylmethanemethyl)cysteine.

The protein belongs to the HMBS family. As to quaternary structure, monomer. Dipyrromethane is required as a cofactor.

It catalyses the reaction 4 porphobilinogen + H2O = hydroxymethylbilane + 4 NH4(+). It functions in the pathway porphyrin-containing compound metabolism; protoporphyrin-IX biosynthesis; coproporphyrinogen-III from 5-aminolevulinate: step 2/4. Its pathway is porphyrin-containing compound metabolism; chlorophyll biosynthesis. Functionally, tetrapolymerization of the monopyrrole PBG into the hydroxymethylbilane pre-uroporphyrinogen in several discrete steps. The sequence is that of Porphobilinogen deaminase from Prochlorococcus marinus (strain NATL1A).